Consider the following 485-residue polypeptide: Aldehyde dehydrogenase family 3 member A2 (485 aa).

Residues 1 to 463 lie on the Cytoplasmic side of the membrane; it reads MEREVQRVRQ…FLLRRFNKEK (463 aa). 185 to 190 provides a ligand contact to NAD(+); that stretch reads GNTAVG. Active-site residues include Glu-207 and Cys-241. Ser-293 bears the Phosphoserine mark. A helical transmembrane segment spans residues 464-484; sequence LGLLVLTFLGIVAAVLVNAGY. The Prevents secretion from ER signature appears at 481 to 484; it reads NAGY.

The protein belongs to the aldehyde dehydrogenase family. In terms of assembly, homodimer.

It is found in the microsome membrane. The protein resides in the endoplasmic reticulum membrane. The catalysed reaction is an aldehyde + NAD(+) + H2O = a carboxylate + NADH + 2 H(+). The enzyme catalyses a fatty aldehyde + NAD(+) + H2O = a fatty acid + NADH + 2 H(+). It carries out the reaction (2E)-hexadecenal + NAD(+) + H2O = (E)-hexadec-2-enoate + NADH + 2 H(+). It catalyses the reaction hexadecanoate + NADH + 2 H(+) = hexadecanal + NAD(+) + H2O. The catalysed reaction is 22-oxodocosanoate + NAD(+) + H2O = docosanedioate + NADH + 2 H(+). The enzyme catalyses 2,6,10,14-tetramethylpentadecanal + NAD(+) + H2O = 2,6,10,14-tetramethylpentadecanoate + NADH + 2 H(+). It carries out the reaction octadecanal + NAD(+) + H2O = octadecanoate + NADH + 2 H(+). It catalyses the reaction dodecanoate + NADH + 2 H(+) = dodecanal + NAD(+) + H2O. The catalysed reaction is decanal + NAD(+) + H2O = decanoate + NADH + 2 H(+). The enzyme catalyses tetradecanal + NAD(+) + H2O = tetradecanoate + NADH + 2 H(+). It carries out the reaction octanal + NAD(+) + H2O = octanoate + NADH + 2 H(+). It catalyses the reaction heptanal + NAD(+) + H2O = heptanoate + NADH + 2 H(+). The catalysed reaction is (2E,6E)-farnesal + NAD(+) + H2O = (2E,6E)-farnesoate + NADH + 2 H(+). In terms of biological role, catalyzes the oxidation of medium and long-chain aliphatic aldehydes to fatty acids. Active on a variety of saturated and unsaturated aliphatic aldehydes between 6 and 24 carbons in length. Responsible for conversion of the sphingosine 1-phosphate (S1P) degradation product hexadecenal to hexadecenoic acid. The chain is Aldehyde dehydrogenase family 3 member A2 (ALDH3A2) from Macaca fascicularis (Crab-eating macaque).